The sequence spans 445 residues: Allantoinase (445 aa).

Positions 63, 65, 150, 186, 238, and 311 each coordinate Zn(2+). At Lys150 the chain carries N6-carboxylysine.

Belongs to the metallo-dependent hydrolases superfamily. Allantoinase family. In terms of assembly, homotetramer. Zn(2+) is required as a cofactor. Post-translationally, carboxylation allows a single lysine to coordinate two zinc ions.

The enzyme catalyses (S)-allantoin + H2O = allantoate + H(+). It participates in nitrogen metabolism; (S)-allantoin degradation; allantoate from (S)-allantoin: step 1/1. Catalyzes the conversion of allantoin (5-ureidohydantoin) to allantoic acid by hydrolytic cleavage of the five-member hydantoin ring. The polypeptide is Allantoinase (Streptomyces avermitilis (strain ATCC 31267 / DSM 46492 / JCM 5070 / NBRC 14893 / NCIMB 12804 / NRRL 8165 / MA-4680)).